We begin with the raw amino-acid sequence, 106 residues long: Small ribosomal subunit protein uS10 (106 aa).

The protein belongs to the universal ribosomal protein uS10 family. Part of the 30S ribosomal subunit.

Involved in the binding of tRNA to the ribosomes. The sequence is that of Small ribosomal subunit protein uS10 from Prochlorococcus marinus (strain MIT 9303).